Consider the following 277-residue polypeptide: Caspase-3 (277 aa).

The residue at position 1 (methionine 1) is an N-acetylmethionine. 2 propeptides span residues 1-9 and 10-28; these read MENNKTSVD and SKSIKTLETKILHGSKSMD. N6-acetyllysine is present on lysine 11. Residue serine 26 is modified to Phosphoserine. Active-site residues include histidine 121 and cysteine 163. Residue cysteine 163 is modified to S-nitrosocysteine; in inhibited form.

This sequence belongs to the peptidase C14A family. Heterotetramer that consists of two anti-parallel arranged heterodimers, each one formed by a 17 kDa (p17) and a 12 kDa (p12) subunit. Interacts with BIRC6/bruce. As to quaternary structure, (Microbial infection) Subunit p17 interacts with African swine fever virus (ASFV) inhibitor of apoptosis protein. Post-translationally, cleavage by granzyme B, caspase-6, caspase-8 and caspase-10 generates the two active subunits. Additional processing of the propeptides is likely due to the autocatalytic activity of the activated protease. Active heterodimers between the small subunit of caspase-7 protease and the large subunit of caspase-3 also occur and vice versa. S-nitrosylated on its catalytic site cysteine in unstimulated cell lines and denitrosylated upon activation of the Fas apoptotic pathway, associated with an increase in intracellular caspase activity. Fas therefore activates caspase-3 not only by inducing the cleavage of the caspase zymogen to its active subunits, but also by stimulating the denitrosylation of its active site thiol. In terms of processing, ubiquitinated by BIRC6; this activity is inhibited by DIABLO/SMAC.

Its subcellular location is the cytoplasm. It carries out the reaction Strict requirement for an Asp residue at positions P1 and P4. It has a preferred cleavage sequence of Asp-Xaa-Xaa-Asp-|- with a hydrophobic amino-acid residue at P2 and a hydrophilic amino-acid residue at P3, although Val or Ala are also accepted at this position.. Its activity is regulated as follows. Inhibited by BIRC6; following inhibition of BIRC6-caspase binding by DIABLO/SMAC, BIRC6 is subjected to caspase cleavage, leading to an increase in active caspases. Its function is as follows. Involved in the activation cascade of caspases responsible for apoptosis execution. At the onset of apoptosis, it proteolytically cleaves poly(ADP-ribose) polymerase PARP1 at a '216-Asp-|-Gly-217' bond. Cleaves and activates sterol regulatory element binding proteins (SREBPs) between the basic helix-loop-helix leucine zipper domain and the membrane attachment domain. Cleaves and activates caspase-6, -7 and -9 (CASP6, CASP7 and CASP9, respectively). Cleaves and inactivates interleukin-18 (IL18). Triggers cell adhesion in sympathetic neurons through RET cleavage. Cleaves IL-1 beta between an Asp and an Ala, releasing the mature cytokine which is involved in a variety of inflammatory processes. Cleaves and inhibits serine/threonine-protein kinase AKT1 in response to oxidative stress. Acts as an inhibitor of type I interferon production during virus-induced apoptosis by mediating cleavage of antiviral proteins CGAS, IRF3 and MAVS, thereby preventing cytokine overproduction. Also involved in pyroptosis by mediating cleavage and activation of gasdermin-E (GSDME). Cleaves XRCC4 and phospholipid scramblase proteins XKR4, XKR8 and XKR9, leading to promote phosphatidylserine exposure on apoptotic cell surface. Cleaves BIRC6 following inhibition of BIRC6-caspase binding by DIABLO/SMAC. This chain is Caspase-3 (CASP3), found in Sus scrofa (Pig).